The primary structure comprises 179 residues: Probable phosphopantothenoylcysteine decarboxylase (179 aa).

Asn124 serves as a coordination point for substrate. Catalysis depends on Cys157, which acts as the Proton donor.

Belongs to the HFCD (homooligomeric flavin containing Cys decarboxylase) superfamily. The cofactor is FMN.

It carries out the reaction N-[(R)-4-phosphopantothenoyl]-L-cysteine + H(+) = (R)-4'-phosphopantetheine + CO2. It participates in cofactor biosynthesis; coenzyme A biosynthesis; CoA from (R)-pantothenate: step 3/5. Its function is as follows. Catalyzes the decarboxylation of 4'-phosphopantothenoylcysteine to 4'-phosphopantetheine. The chain is Probable phosphopantothenoylcysteine decarboxylase (coaC) from Streptococcus mutans serotype c (strain ATCC 700610 / UA159).